The primary structure comprises 318 residues: HPr kinase/phosphorylase (318 aa).

Catalysis depends on residues His146 and Lys167. 161-168 (GESGLGKS) serves as a coordination point for ATP. Ser168 is a binding site for Mg(2+). The Proton acceptor; for phosphorylation activity. Proton donor; for dephosphorylation activity role is filled by Asp185. The important for the catalytic mechanism of both phosphorylation and dephosphorylation stretch occupies residues 209 to 218 (LEVRGIGLLD). Glu210 is a binding site for Mg(2+). Arg252 is an active-site residue. Residues 273–278 (QVVAGR) form an important for the catalytic mechanism of dephosphorylation region.

This sequence belongs to the HPrK/P family. In terms of assembly, homohexamer. It depends on Mg(2+) as a cofactor.

It carries out the reaction [HPr protein]-L-serine + ATP = [HPr protein]-O-phospho-L-serine + ADP + H(+). The enzyme catalyses [HPr protein]-O-phospho-L-serine + phosphate + H(+) = [HPr protein]-L-serine + diphosphate. In terms of biological role, catalyzes the ATP- as well as the pyrophosphate-dependent phosphorylation of a specific serine residue in HPr, a phosphocarrier protein of the phosphoenolpyruvate-dependent sugar phosphotransferase system (PTS). HprK/P also catalyzes the pyrophosphate-producing, inorganic phosphate-dependent dephosphorylation (phosphorolysis) of seryl-phosphorylated HPr (P-Ser-HPr). The sequence is that of HPr kinase/phosphorylase from Verminephrobacter eiseniae (strain EF01-2).